The chain runs to 823 residues: Polyadenylation and cleavage factor homolog 11 (823 aa).

The CID domain occupies 3–135 (SVESAARDYR…ELDMKINKLD (133 aa)). Disordered stretches follow at residues 142–176 (NPQT…STST), 188–301 (SSTP…KTLK), 340–395 (SSAP…LPAP), 570–643 (LPAP…EKRS), and 728–755 (WLTP…VASS). Composition is skewed to polar residues over residues 157–176 (APSQ…STST) and 188–198 (SSTPGAASASK). The segment covering 200–226 (VVEKTKSPGTVNKEKQVKKEPKQDPLD) has biased composition (basic and acidic residues). 2 stretches are compositionally biased toward low complexity: residues 227 to 242 (KLLP…SSPA) and 342 to 353 (APPFQHPQQHHP). Residues 374-390 (PQDPAPIVPVQAPPPQQ) are compositionally biased toward pro residues. A compositionally biased stretch (low complexity) spans 571 to 581 (PAPARSPSSPR). The span at 609–624 (QPQQNARWGGANKQQN) shows a compositional bias: polar residues.

The polypeptide is Polyadenylation and cleavage factor homolog 11 (pcf-11) (Caenorhabditis elegans).